Reading from the N-terminus, the 20-residue chain is Toxin TpF21-Cocle (20 aa).

In terms of domain architecture, LCN-type CS-alpha/beta spans 1–20 (KDGYLVGNDGCKYSCNTYPK).

Belongs to the long (4 C-C) scorpion toxin superfamily. Sodium channel inhibitor family. Beta subfamily. Expressed by the venom gland.

The protein localises to the secreted. Its function is as follows. Beta toxins bind voltage-independently at site-4 of sodium channels (Nav) and shift the voltage of activation toward more negative potentials thereby affecting sodium channel activation and promoting spontaneous and repetitive firing. The polypeptide is Toxin TpF21-Cocle (Tityus pachyurus (Colombian scorpion)).